Reading from the N-terminus, the 1550-residue chain is Cellulose synthase 1 (1550 aa).

Positions 1–741 (MPEVRSSTQS…KERVLKGTVK (741 aa)) are catalytic. Helical transmembrane passes span 26-46 (GAGLIIGVFGLCALIAATSVT), 47-67 (LPPEQQLIVAFVCVVIFFIVG), and 106-126 (GLLGTMLLVAELYALMMLFLS). Residues 147-240 (EWPTVDIFVP…YILIFDCDHV (94 aa)) are catalytic subdomain A. D189 is a catalytic residue. Residues D236 and D238 each coordinate substrate. Positions 317-377 (TAIEQIGGFA…GQRVRWARGM (61 aa)) are catalytic subdomain B. Residue D333 is part of the active site. Transmembrane regions (helical) follow at residues 398-418 (LCYLSAMTSFLFAVPRVIFLS), 423-443 (FLFFGQNIIAASPLALLAYAI), 468-488 (VYETTMALFLVRVTIVTLLSP), 507-527 (FDLGAVYPNIILGLIMFGGLA), and 547-567 (LLNSAWAMLSLIIILAAIAVG). The PilZ domain maps to 572–647 (QKRNSHRIPA…PARIIRAGNG (76 aa)). Disordered regions lie at residues 708 to 731 (VHRSSPTKPSAGNALSDDTNNPSR) and 768 to 813 (APAH…QPLA). Residues 742–1550 (MVSLLALLTF…KQLEDERRKS (809 aa)) form a cyclic di-GMP binding domain region. A compositionally biased stretch (low complexity) spans 768-796 (APAHQPEASDLPPLPALLPATSGAAQAGS). The helical transmembrane segment at 1513–1533 (VLLVGLLGCILIVSVLARALA) threads the bilayer.

It in the N-terminal section; belongs to the glycosyltransferase 2 family. The protein in the C-terminal section; belongs to the AcsB/BcsB family. Mg(2+) serves as cofactor.

It is found in the cell inner membrane. The enzyme catalyses [(1-&gt;4)-beta-D-glucosyl](n) + UDP-alpha-D-glucose = [(1-&gt;4)-beta-D-glucosyl](n+1) + UDP + H(+). The protein operates within glycan metabolism; bacterial cellulose biosynthesis. Functionally, bifunctional protein comprised of a catalytic subunit and a regulatory subunit. The catalytic subunit of cellulose synthase polymerizes uridine 5'-diphosphate glucose to cellulose in a processive way. The thick cellulosic mats generated by this enzyme probably provide a specialized protective environment to the bacterium. The regulatory subunit binds bis-(3'-5') cyclic diguanylic acid (c-di-GMP). This Novacetimonas hansenii (Komagataeibacter hansenii) protein is Cellulose synthase 1 (acsAB).